The following is a 203-amino-acid chain: uncharacterized protein (203 aa).

This is an uncharacterized protein from Pasteurella multocida (strain Pm70).